The following is a 1156-amino-acid chain: ATP-dependent RNA helicase glh-4 (1156 aa).

Disordered stretches follow at residues 1-81 (MSFS…GAPS), 194-213 (TGVG…GQQP), 231-423 (SSSG…DSST), and 436-522 (HRAS…SGLG). The segment covering 12–22 (AEVKVAEDVPE) has biased composition (basic and acidic residues). The segment covering 24–34 (NVPPPVEPPRA) has biased composition (pro residues). Polar residues-rich tracts occupy residues 60–73 (ITTS…TTPK), 194–211 (TGVG…SFGQ), and 243–258 (TESS…TSQP). Residues 259 to 281 (GFGGDSSTGFGSGLKAGFGGHGA) are compositionally biased toward gly residues. The span at 307–319 (ASSSNESAFGQQS) shows a compositional bias: polar residues. Composition is skewed to gly residues over residues 321 to 332 (GFGGATKNGFGG) and 342 to 358 (SKAG…GGQK). Composition is skewed to polar residues over residues 362–371 (TESSGFPTKE) and 395–406 (PSTTDSSSGQQT). A compositionally biased stretch (gly residues) spans 408-423 (GFGGASKPGFGGDSST). 2 stretches are compositionally biased toward polar residues: residues 440–451 (TAENSGLPTETT) and 464–476 (ASSS…GQQS). Over residues 478 to 489 (GFGGATKNGFGG) the composition is skewed to gly residues. 5 consecutive CCHC-type zinc fingers follow at residues 570–587 (RGCH…ECDK), 593–610 (FPCR…DCDQ), 616–633 (GPCR…DCDQ), 639–656 (GPCR…DCQN), and 665–682 (EPCR…ECPT). The Q motif signature appears at 736-764 (SFDGFKILPQDLHDNLKRMKMNRPTPIQR). A Helicase ATP-binding domain is found at 767–951 (FFPIMHGNDV…LPKFVKEGYT (185 aa)). 780-787 (AHTGSGKT) is an ATP binding site. Positions 897–900 (DEAD) match the DEAD box motif. Positions 986 to 1139 (GIDENTVTLL…EVPEWLTEGA (154 aa)) constitute a Helicase C-terminal domain. The segment at 1135-1156 (LTEGAGHQEEGGDDWNEQEQEW) is disordered. Acidic residues predominate over residues 1145 to 1156 (GGDDWNEQEQEW).

It belongs to the DEAD box helicase family. DDX4/VASA subfamily. In terms of assembly, interacts (via C-terminus) with kgb-1.

The enzyme catalyses ATP + H2O = ADP + phosphate + H(+). Functionally, probable ATP-binding RNA helicase. May act redundantly with the P-granule component glh-1 to regulate the formation of the granular structure of P-granules in embryos. May protect somatic cells from excessive apoptosis during normal development. The chain is ATP-dependent RNA helicase glh-4 from Caenorhabditis elegans.